A 488-amino-acid chain; its full sequence is Phenylalanine--tRNA ligase alpha subunit (488 aa).

L-phenylalanine is bound by residues Thr-332, 371-373 (QLD), and Phe-410. Residue Glu-412 participates in Mg(2+) binding. Phe-435 provides a ligand contact to L-phenylalanine.

This sequence belongs to the class-II aminoacyl-tRNA synthetase family. Phe-tRNA synthetase alpha subunit type 2 subfamily. Tetramer of two alpha and two beta subunits. Requires Mg(2+) as cofactor.

It is found in the cytoplasm. It carries out the reaction tRNA(Phe) + L-phenylalanine + ATP = L-phenylalanyl-tRNA(Phe) + AMP + diphosphate + H(+). The sequence is that of Phenylalanine--tRNA ligase alpha subunit from Aeropyrum pernix (strain ATCC 700893 / DSM 11879 / JCM 9820 / NBRC 100138 / K1).